A 193-amino-acid polypeptide reads, in one-letter code: 3-isopropylmalate dehydratase small subunit (193 aa).

Belongs to the LeuD family. LeuD type 1 subfamily. Heterodimer of LeuC and LeuD.

The catalysed reaction is (2R,3S)-3-isopropylmalate = (2S)-2-isopropylmalate. The protein operates within amino-acid biosynthesis; L-leucine biosynthesis; L-leucine from 3-methyl-2-oxobutanoate: step 2/4. Functionally, catalyzes the isomerization between 2-isopropylmalate and 3-isopropylmalate, via the formation of 2-isopropylmaleate. The chain is 3-isopropylmalate dehydratase small subunit from Bacillus cereus (strain AH820).